A 457-amino-acid polypeptide reads, in one-letter code: MSTPNSDSPAAQAAKKVFSRLDLDGHNLPPSPAPSSPHNGRRYALATELVYTETKDQYGASSIPIYQSATFKQSSSNGGSEYDYTRSGNPTRTHLERHLAKIMNANRCLSVSSGMGALDVITRLLKPGDEVITGDDLYGGTNRLLTYLKNNQGVIVHHVDTTNVESVRQIISPKTTMVLLETPTNPLIKICDIPTIARITHEANEKAVVVVDNTMLSPMLFNPLDVGADIVYESGTKYLSGHHDIMAGVIAVNDTELGDKLYFTINATGCGLSPNDSFLLMRGVKTLAIRMEKQQANAQRIAEFLESHGFKVRYPGLKSHPQYDLHWSMARGAGAVLSFETGDVALSERIVEAARLWGISVSFGCVNSLISMPCRMSHASIDAKTRAERQMPEDIIRLCVGIEDADDLIDDLSRALVQAGAVTLTVDGFHANTAEGAAAAAAGSEAAETTTTAAPSL.

The interval 1 to 41 is disordered; that stretch reads MSTPNSDSPAAQAAKKVFSRLDLDGHNLPPSPAPSSPHNGR.

Belongs to the trans-sulfuration enzymes family. The cofactor is pyridoxal 5'-phosphate.

It localises to the cytoplasm. It is found in the nucleus. It catalyses the reaction L,L-cystathionine + H2O = L-homocysteine + pyruvate + NH4(+). The catalysed reaction is an S-substituted L-cysteine + H2O = a thiol + pyruvate + NH4(+). Its pathway is amino-acid biosynthesis; L-methionine biosynthesis via de novo pathway; L-homocysteine from L-cystathionine: step 1/1. Involved in de novo synthesis of methionine. The polypeptide is Cystathionine beta-lyase (met-2) (Neurospora crassa (strain ATCC 24698 / 74-OR23-1A / CBS 708.71 / DSM 1257 / FGSC 987)).